The sequence spans 352 residues: Ribosome biogenesis protein BRX1 homolog (352 aa).

A disordered region spans residues 1–55 (MGKFSKIKKVQEEESAHQKMEWEAAGAKDSSSDDSSDESDNDDQPKQATEETRKR). Basic and acidic residues predominate over residues 9–22 (KVQEEESAHQKMEW). Residues 32 to 42 (SDDSSDESDND) are compositionally biased toward acidic residues. Over residues 43 to 55 (DQPKQATEETRKR) the composition is skewed to basic and acidic residues. In terms of domain architecture, Brix spans 63-253 (ERVLVLCSRG…MVRLFAGSFE (191 aa)).

Belongs to the BRX1 family.

The protein localises to the nucleus. It localises to the nucleolus. In terms of biological role, required for biogenesis of the 60S ribosomal subunit. This is Ribosome biogenesis protein BRX1 homolog from Caenorhabditis elegans.